The sequence spans 503 residues: Glutamate--tRNA ligase (503 aa).

Residues 15–25 carry the 'HIGH' region motif; sequence PSPTGYLHVGG. A 'KMSKS' region motif is present at residues 262-266; sequence KLSKR. K265 is a binding site for ATP.

It belongs to the class-I aminoacyl-tRNA synthetase family. Glutamate--tRNA ligase type 1 subfamily. As to quaternary structure, monomer.

The protein localises to the cytoplasm. It catalyses the reaction tRNA(Glu) + L-glutamate + ATP = L-glutamyl-tRNA(Glu) + AMP + diphosphate. Catalyzes the attachment of glutamate to tRNA(Glu) in a two-step reaction: glutamate is first activated by ATP to form Glu-AMP and then transferred to the acceptor end of tRNA(Glu). The protein is Glutamate--tRNA ligase of Prosthecochloris aestuarii (strain DSM 271 / SK 413).